Reading from the N-terminus, the 274-residue chain is Non-heme haloperoxidase (274 aa).

Residues 22 to 254 form the AB hydrolase-1 domain; that stretch reads PIMFHHGWPL…RLKVYPGLSH (233 aa). Residues Ser-95, Asp-225, and His-254 contribute to the active site.

The protein belongs to the AB hydrolase superfamily. Bacterial non-heme haloperoxidase / perhydrolase family.

This Rhodococcus erythropolis (Arthrobacter picolinophilus) protein is Non-heme haloperoxidase (thcF).